Reading from the N-terminus, the 372-residue chain is Alpha-L-fucosidase 3 (372 aa).

The signal sequence occupies residues 1–23 (MNPILSSLFALSLLSSLSPSTHA). Catalysis depends on Ser-37, which acts as the Nucleophile. N-linked (GlcNAc...) asparagine glycosylation is found at Asn-96, Asn-114, Asn-139, and Asn-182. Active-site residues include Asp-345 and His-348.

It belongs to the 'GDSL' lipolytic enzyme family. In terms of tissue distribution, high expression in younger leaves and in the apical region of the inflorescence stem.

It is found in the secreted. Its subcellular location is the extracellular space. The protein localises to the apoplast. The catalysed reaction is an alpha-L-fucoside + H2O = L-fucose + an alcohol. Functionally, hydrolyzes alpha-1,2-linked fucose. Also active on fucosylated xyloglucan oligosaccharides. In Arabidopsis thaliana (Mouse-ear cress), this protein is Alpha-L-fucosidase 3 (FXG1).